Consider the following 274-residue polypeptide: MRWCLFALWVFGVATVVTAAEEPHHDAAPQTDNEVDLTEDDKRAWSSLHSGWAKRAWQDMSSAWGKRAWQDLNSAWGKRGWQDLNSAWGKRAWQDLNSAWGKRGWQDLNSAWGKRDDDEAMEKKSWQDLNSVWGKRAWQDLNSAWGKRAWQDLNSAWGKRGWNDISSVWGKRAWQDLNSAWGKRAWQDMSSAWGKRAPEKWAAFHGSWGKRSSIEPDYEEIDAVEQLVPYQQAPNEEHIDAPEKKAWSALHGTWGKRPVKPMFNNEHSATTNEA.

The signal sequence occupies residues 1-19 (MRWCLFALWVFGVATVVTA). Positions 20–67 (AEEPHHDAAPQTDNEVDLTEDDKRAWSSLHSGWAKRAWQDMSSAWGKR) are excised as a propeptide. A Tryptophan amide modification is found at W76. A propeptide spanning residues 77-91 (GKRGWQDLNSAWGKR) is cleaved from the precursor. W100 carries the tryptophan amide modification. A propeptide spanning residues 101-136 (GKRGWQDLNSAWGKRDDDEAMEKKSWQDLNSVWGKR) is cleaved from the precursor. W145 carries the post-translational modification Tryptophan amide. Residues 146-148 (GKR) constitute a propeptide that is removed on maturation. W157 is modified (tryptophan amide). The propeptide occupies 158 to 172 (GKRGWNDISSVWGKR). Residue W181 is modified to Tryptophan amide. The propeptide occupies 182–274 (GKRAWQDMSS…NEHSATTNEA (93 aa)).

It localises to the secreted. In terms of biological role, inhibits ecdysteroid biosynthesis in the prothoracic gland of fifth instar larvae, with maximum inhibition during the spinning stage. When administered to day 8 fifth instar larvae it produces a significant delay in the commencement spinning behavior. In Bombyx mori (Silk moth), this protein is Prothoracicostatic peptide.